A 397-amino-acid chain; its full sequence is Putative nickel insertion protein (397 aa).

The protein belongs to the LarC family.

This Synechococcus sp. (strain JA-3-3Ab) (Cyanobacteria bacterium Yellowstone A-Prime) protein is Putative nickel insertion protein.